The following is a 347-amino-acid chain: Endophilin-A3 (347 aa).

The interval M1 to I21 is membrane-binding amphipathic helix. The region spanning S18–S249 is the BAR domain. The required for dimerization upon membrane association stretch occupies residues P60 to P87. Residues E181 to M201 are a coiled coil. Positions F218–E254 are interaction with ARC. The interval S248 to S271 is disordered. S265 carries the post-translational modification Phosphoserine. The 60-residue stretch at M285 to P344 folds into the SH3 domain.

The protein belongs to the endophilin family. Interacts with ARC. Interacts with DNM1, SGIP1 and SYNJ1. Interacts with the huntingtin exon 1 protein (HDEX1P) containing a glutamine repeat in the pathological range and promotes formation of insoluble polyglutamine-containing aggregates in vivo. Interacts with DYDC1. Interacts with FASLG. Interacts with ATXN2. Interacts with BIN2. In terms of tissue distribution, brain and testis.

It localises to the cytoplasm. The protein localises to the early endosome membrane. In terms of biological role, implicated in endocytosis. May recruit other proteins to membranes with high curvature. The sequence is that of Endophilin-A3 (SH3GL3) from Homo sapiens (Human).